Here is a 349-residue protein sequence, read N- to C-terminus: tRNA pseudouridine synthase D (349 aa).

Position 27 (phenylalanine 27) interacts with substrate. Aspartate 80 acts as the Nucleophile in catalysis. Residue asparagine 129 participates in substrate binding. One can recognise a TRUD domain in the interval 155–303 (GVPNYFGAQR…VEAARRAMLL (149 aa)). A substrate-binding site is contributed by phenylalanine 329.

Belongs to the pseudouridine synthase TruD family.

It catalyses the reaction uridine(13) in tRNA = pseudouridine(13) in tRNA. Responsible for synthesis of pseudouridine from uracil-13 in transfer RNAs. The polypeptide is tRNA pseudouridine synthase D (Shigella boydii serotype 4 (strain Sb227)).